A 311-amino-acid polypeptide reads, in one-letter code: Acetyl-coenzyme A carboxylase carboxyl transferase subunit alpha (311 aa).

A CoA carboxyltransferase C-terminal domain is found at glutamate 36–glutamate 286.

Belongs to the AccA family. Acetyl-CoA carboxylase is a heterohexamer composed of biotin carboxyl carrier protein (AccB), biotin carboxylase (AccC) and two subunits each of ACCase subunit alpha (AccA) and ACCase subunit beta (AccD).

It localises to the cytoplasm. It catalyses the reaction N(6)-carboxybiotinyl-L-lysyl-[protein] + acetyl-CoA = N(6)-biotinyl-L-lysyl-[protein] + malonyl-CoA. The protein operates within lipid metabolism; malonyl-CoA biosynthesis; malonyl-CoA from acetyl-CoA: step 1/1. Functionally, component of the acetyl coenzyme A carboxylase (ACC) complex. First, biotin carboxylase catalyzes the carboxylation of biotin on its carrier protein (BCCP) and then the CO(2) group is transferred by the carboxyltransferase to acetyl-CoA to form malonyl-CoA. The polypeptide is Acetyl-coenzyme A carboxylase carboxyl transferase subunit alpha (Wolinella succinogenes (strain ATCC 29543 / DSM 1740 / CCUG 13145 / JCM 31913 / LMG 7466 / NCTC 11488 / FDC 602W) (Vibrio succinogenes)).